The following is a 257-amino-acid chain: MLLAIDCGNTNTVFSIWDGTQFLATWRIATDHKRTADEYHVWLSTLLSLTRIEARITEAVISSTVPRVVFNLRVLCNRYYDCRPLVVGKPECRLPVAPRVDQGTTVGPDRLVNTVAGYHLHGGNLIVVDFGTATTFDVVDADGAYIGGVIAPGVNLSLEALHMAAAALPHVDVTKPPHAIGTNTVACIQSGVYWGYIGLVEGIVRQIRLERHAPMKVIATGGLAPLFDQGFDLFDKVEDDLTMQGLVLIHQYNKELE.

6 to 13 (DCGNTNTV) lines the ATP pocket. A substrate-binding site is contributed by 107–110 (GPDR). The active-site Proton acceptor is the D109. D129 contacts K(+). An ATP-binding site is contributed by T132. Residue T184 participates in substrate binding.

This sequence belongs to the type III pantothenate kinase family. As to quaternary structure, homodimer. It depends on NH4(+) as a cofactor. K(+) serves as cofactor.

The protein localises to the cytoplasm. It catalyses the reaction (R)-pantothenate + ATP = (R)-4'-phosphopantothenate + ADP + H(+). The protein operates within cofactor biosynthesis; coenzyme A biosynthesis; CoA from (R)-pantothenate: step 1/5. Catalyzes the phosphorylation of pantothenate (Pan), the first step in CoA biosynthesis. This chain is Type III pantothenate kinase, found in Cereibacter sphaeroides (strain ATCC 17025 / ATH 2.4.3) (Rhodobacter sphaeroides).